The following is a 477-amino-acid chain: MSPQTETKASVGFKAGVKEYKLTYYTPEYQTKDTDILAAFRVTPQPGVPPEEAGAAVAAESSTGTWTTVWTDGLTSLDRYKGRCYRIERVVGEKDQYIAYVAYPLDLFEEGSVTNMFTSIVGNVFGFKALRALRLEDLRIPPAYVKTFQGPPHGIQVERDKLNKYGRPLLGCTIKPKLGLSAKNYGRAVYECLRGGLDFTKDDENVNSQPFMRWRDRFLFCAEALYKAQTETGEIKGHYLNATAGTCEEMIKRAVFARELGVPIVMHDYLTGGFTANTSLAHYCRDNGLLLHTHRAMHAVIDRQKNHGIHFRVLAKALRMSGGDHIHSGTVVGKLEGERDITLGFVDLLRDDFVEQDRSRGIYFTQDWVSLPGVLPVASGGIHVWHMPALTEIFGDDSVLQFGGGTLGHPWGNAPGAVANRLALEACVQARNEGRDLAQEGNEIIREACKWSPELAAACQVWKEIVFNFAAVDVLDK.

Positions 1-2 (MS) are excised as a propeptide. At proline 3 the chain carries N-acetylproline. Residue lysine 14 is modified to N6,N6,N6-trimethyllysine. Substrate is bound by residues asparagine 123 and threonine 173. The active-site Proton acceptor is lysine 175. Residue lysine 177 coordinates substrate. Mg(2+)-binding residues include lysine 201, aspartate 203, and glutamate 204. Lysine 201 is subject to N6-carboxylysine. Residue histidine 294 is the Proton acceptor of the active site. Substrate is bound by residues arginine 295, histidine 327, and serine 379.

Belongs to the RuBisCO large chain family. Type I subfamily. As to quaternary structure, heterohexadecamer of 8 large chains and 8 small chains; disulfide-linked. The disulfide link is formed within the large subunit homodimers. The cofactor is Mg(2+). The disulfide bond which can form in the large chain dimeric partners within the hexadecamer appears to be associated with oxidative stress and protein turnover.

Its subcellular location is the plastid. It is found in the chloroplast. It carries out the reaction 2 (2R)-3-phosphoglycerate + 2 H(+) = D-ribulose 1,5-bisphosphate + CO2 + H2O. The enzyme catalyses D-ribulose 1,5-bisphosphate + O2 = 2-phosphoglycolate + (2R)-3-phosphoglycerate + 2 H(+). Functionally, ruBisCO catalyzes two reactions: the carboxylation of D-ribulose 1,5-bisphosphate, the primary event in carbon dioxide fixation, as well as the oxidative fragmentation of the pentose substrate in the photorespiration process. Both reactions occur simultaneously and in competition at the same active site. The polypeptide is Ribulose bisphosphate carboxylase large chain (Nicotiana otophora (Tobacco)).